The primary structure comprises 38 residues: Alpha-2-macroglobulin homolog (38 aa).

Positions 27–30 (CGEQ) form a cross-link, isoglutamyl cysteine thioester (Cys-Gln).

Belongs to the protease inhibitor I39 (alpha-2-macroglobulin) family. In terms of assembly, homodimer; disulfide-linked. Hemolymph.

It localises to the secreted. Is able to inhibit all four classes of proteinases by a unique 'trapping' mechanism. This protein has a peptide stretch, called the 'bait region' which contains specific cleavage sites for different proteinases. When a proteinase cleaves the bait region, a conformational change is induced in the protein which traps the proteinase. The entrapped enzyme remains active against low molecular weight substrates (activity against high molecular weight substrates is greatly reduced). Following cleavage in the bait region a thioester bond is hydrolyzed and mediates the covalent binding of the protein to the proteinase. The chain is Alpha-2-macroglobulin homolog from Homarus americanus (American lobster).